Here is a 477-residue protein sequence, read N- to C-terminus: Ribulose bisphosphate carboxylase large chain (477 aa).

Residues 1 to 2 (MS) constitute a propeptide that is removed on maturation. N-acetylproline is present on Pro-3. Residue Lys-14 is modified to N6,N6,N6-trimethyllysine. The substrate site is built by Asn-123 and Thr-173. Lys-175 functions as the Proton acceptor in the catalytic mechanism. Lys-177 provides a ligand contact to substrate. Mg(2+) is bound by residues Lys-201, Asp-203, and Glu-204. At Lys-201 the chain carries N6-carboxylysine. The active-site Proton acceptor is the His-294. Substrate is bound by residues Arg-295, His-327, and Ser-379.

This sequence belongs to the RuBisCO large chain family. Type I subfamily. As to quaternary structure, heterohexadecamer of 8 large chains and 8 small chains; disulfide-linked. The disulfide link is formed within the large subunit homodimers. The cofactor is Mg(2+). The disulfide bond which can form in the large chain dimeric partners within the hexadecamer appears to be associated with oxidative stress and protein turnover.

The protein localises to the plastid. It localises to the chloroplast. It catalyses the reaction 2 (2R)-3-phosphoglycerate + 2 H(+) = D-ribulose 1,5-bisphosphate + CO2 + H2O. It carries out the reaction D-ribulose 1,5-bisphosphate + O2 = 2-phosphoglycolate + (2R)-3-phosphoglycerate + 2 H(+). Functionally, ruBisCO catalyzes two reactions: the carboxylation of D-ribulose 1,5-bisphosphate, the primary event in carbon dioxide fixation, as well as the oxidative fragmentation of the pentose substrate in the photorespiration process. Both reactions occur simultaneously and in competition at the same active site. The polypeptide is Ribulose bisphosphate carboxylase large chain (Dioscorea elephantipes (Elephant's foot yam)).